A 331-amino-acid polypeptide reads, in one-letter code: DSC E3 ubiquitin ligase complex subunit D (331 aa).

A glycan (N-linked (GlcNAc...) asparagine) is linked at Asn26. The next 3 helical transmembrane spans lie at 63–83, 107–127, and 159–179; these read ILIY…ILFA, PFIG…NFFT, and LFLL…LIVE. Positions 188 to 225 are disordered; sequence STTSTEILRVQDHDSEERGVHRTRPESRSSVVGAELDE. Residues 196–214 show a composition bias toward basic and acidic residues; the sequence is RVQDHDSEERGVHRTRPES.

As to quaternary structure, component of the DSC E3 ubiquitin ligase complex composed of dscA, dscB, dscC and dscD.

The protein localises to the endoplasmic reticulum membrane. It functions in the pathway protein modification; protein ubiquitination. In terms of biological role, component of the DSC E3 ubiquitin ligase complex which is required for the srbA transcriptional activator proteolytic cleavage to release the soluble transcription factor from the membrane in low oxygen or sterol conditions. Required for growth during hypoxia and triazole drug susceptibility, as well as for virulence in a murine model of invasive pulmonary aspergillosis (IPA). The polypeptide is DSC E3 ubiquitin ligase complex subunit D (Aspergillus fumigatus (strain ATCC MYA-4609 / CBS 101355 / FGSC A1100 / Af293) (Neosartorya fumigata)).